The following is a 185-amino-acid chain: Peptidyl-tRNA hydrolase (185 aa).

Y14 provides a ligand contact to tRNA. The active-site Proton acceptor is the H19. TRNA-binding residues include F64, N66, and N112.

This sequence belongs to the PTH family. Monomer.

The protein localises to the cytoplasm. The enzyme catalyses an N-acyl-L-alpha-aminoacyl-tRNA + H2O = an N-acyl-L-amino acid + a tRNA + H(+). Hydrolyzes ribosome-free peptidyl-tRNAs (with 1 or more amino acids incorporated), which drop off the ribosome during protein synthesis, or as a result of ribosome stalling. In terms of biological role, catalyzes the release of premature peptidyl moieties from peptidyl-tRNA molecules trapped in stalled 50S ribosomal subunits, and thus maintains levels of free tRNAs and 50S ribosomes. This is Peptidyl-tRNA hydrolase from Alkaliphilus metalliredigens (strain QYMF).